We begin with the raw amino-acid sequence, 940 residues long: MSDYKSTLNLPETEFPMRGNLANREPEMLKSWNEKGLYQQIRESRKDSKPFILHDGPPYANGDIHIGHSVNKILKDIIIKSKTMSGFDAPYIPGWDCHGLPIELKVEQKVGKPGHKVTASEFRQKCREYAAKQVDGQRDDFIRLGVFADWQNPYLTMDYNTEANIVRSLSKVIDSGHLHKGVKPVHWCTDCGSALAEAEVEYEDKMSPAIDVAFTAVDKPALLAKFGLTEYAHPISMVIWTTTPWTLPANRALSVAGQLEYTLVEMVKDGQTQALVLAQELVESCVERFGAETHKVLANVLGSELELLRFNHPFYDFDVPVILGEHVTVESGTGVVHTAPGHGQDDFVVGQKYGLEVANPVGDNGVYKADTEIFAGQHVFKANKAVVALLEEKGALLNHVAINHSYPHCWRHKTPIIFRATPQWFISMDQKGLRTQALSEIEKTQWIPDWGQSRIEKMVENRPDWCISRQRTWGVPITLFVHRETEELHPDSVSLMERVANRIEQEGIQAWWDLDAAELLGDEAEQYRKVTDTLDVWYDSGSTFSSVVASRPEFNGHEVDLYLEGSDQHRGWFMSSLMISTAMNGKAPYKQVLTHGFTVDGKGRKMSKSVGNVIAPQHVTNKLGADILRLWVAATDYSGEMTVSDEILKRSADAYRRIRNTARFLLANINGFNPETDMVAVEDMVALDRWVVRRAAALQQELLEAYDQYNFHLVTQKLMQFCSVELGSFYLDIIKDRQYTAKDDSNARRSCQSALYLISEAMVRWIAPVLSFTADEIWKLLPGERGEFVFTETWYEGLQSVTLDSDLSDEFWEQLLTVRAEVNKVIENARREKQIGGSLEAEIMLFADEALSTALSTLGDELRFVLLTSKTDVVALSEAPADAIETELASLKLGLKKSEAEKCERCWHHREEVGQVAEHPTLCTRCVTNIEGEGETRQFA.

The short motif at 58–68 (PYANGDIHIGH) is the 'HIGH' region element. E564 lines the L-isoleucyl-5'-AMP pocket. The 'KMSKS' region motif lies at 605–609 (KMSKS). K608 contributes to the ATP binding site. Residues C903, C906, C923, and C926 each coordinate Zn(2+).

Belongs to the class-I aminoacyl-tRNA synthetase family. IleS type 1 subfamily. In terms of assembly, monomer. Requires Zn(2+) as cofactor.

The protein localises to the cytoplasm. The catalysed reaction is tRNA(Ile) + L-isoleucine + ATP = L-isoleucyl-tRNA(Ile) + AMP + diphosphate. Functionally, catalyzes the attachment of isoleucine to tRNA(Ile). As IleRS can inadvertently accommodate and process structurally similar amino acids such as valine, to avoid such errors it has two additional distinct tRNA(Ile)-dependent editing activities. One activity is designated as 'pretransfer' editing and involves the hydrolysis of activated Val-AMP. The other activity is designated 'posttransfer' editing and involves deacylation of mischarged Val-tRNA(Ile). This chain is Isoleucine--tRNA ligase, found in Shewanella piezotolerans (strain WP3 / JCM 13877).